A 724-amino-acid chain; its full sequence is Aquaglyceroporin-4 (724 aa).

Disordered stretches follow at residues 1–167 (MADE…SIRR), 248–267 (INMA…NQAD), and 302–396 (AHGL…DLDG). Residues 1 to 434 (MADEEIKPTS…VIRLRFREPL (434 aa)) are Cytoplasmic-facing. Over residues 87–96 (LTGQVPQDND) the composition is skewed to polar residues. Over residues 252–265 (QQQQQQQQQQPQNQ) the composition is skewed to low complexity. Composition is skewed to polar residues over residues 307-325 (SPTN…TAPS) and 360-370 (PSQTSQNSQNE). A helical transmembrane segment spans residues 435 to 455 (AELLAVTCQLTLGFCADLVVV). Over 456–472 (TSGKNASPAGNEATTDW) the chain is Extracellular. A helical membrane pass occupies residues 473–493 (AWGLASMLGIYIAGGISGAHL). The NPA 1 signature appears at 494–496 (NPA). Over 494-513 (NPAISIMLWIYRGFPLRKVP) the chain is Cytoplasmic. Residues 514 to 534 (MYVLAQILGAFIAALISFGLY) traverse the membrane as a helical segment. Residues 535–567 (QTNIVEYGGTDLKTSDTMGAFITYPRYPWINAS) lie on the Extracellular side of the membrane. A glycan (N-linked (GlcNAc...) asparagine) is linked at Asn-565. A helical transmembrane segment spans residues 568–588 (TSFFTEFVGTAILAVAVLALG). Residues 589–595 (DDMNAPP) lie on the Cytoplasmic side of the membrane. Residues 596–616 (GAGMSAFILGLVITVLSMAFG) traverse the membrane as a helical segment. Over 617–647 (YNTGAALNPSRDLGPRLALAALGYGKDLFTD) the chain is Extracellular. Positions 624–626 (NPS) match the NPA 2 motif. Residues 648–668 (VYWIWGNWCAPILGAIFGAFL) form a helical membrane-spanning segment. Topologically, residues 669–724 (YDAAIFAGGESPVNYPRKRIKRAGHKWRKKWGVRLRKMKPAKKGEDEAYRRWKESQ) are cytoplasmic.

This sequence belongs to the MIP/aquaporin (TC 1.A.8) family.

It is found in the membrane. It catalyses the reaction H2O(in) = H2O(out). It carries out the reaction glycerol(in) = glycerol(out). In terms of biological role, water channel required to facilitate the transport of water across membranes. May play a role in the vegetative growth. This is Aquaglyceroporin-4 from Botryotinia fuckeliana (strain B05.10) (Noble rot fungus).